We begin with the raw amino-acid sequence, 179 residues long: Transcription factor E (179 aa).

Residues 1 to 102 enclose the HTH TFE/IIEalpha-type domain; the sequence is MAKKKVKYTF…YWRFDSRKAA (102 aa).

It belongs to the TFE family. Monomer. Interaction with RNA polymerase subunits RpoF and RpoE is necessary for Tfe stimulatory transcription activity. Able to interact with Tbp and RNA polymerase in the absence of DNA promoter. Interacts both with the preinitiation and elongation complexes.

In terms of biological role, transcription factor that plays a role in the activation of archaeal genes transcribed by RNA polymerase. Facilitates transcription initiation by enhancing TATA-box recognition by TATA-box-binding protein (Tbp), and transcription factor B (Tfb) and RNA polymerase recruitment. Not absolutely required for transcription in vitro, but particularly important in cases where Tbp or Tfb function is not optimal. It dynamically alters the nucleic acid-binding properties of RNA polymerases by stabilizing the initiation complex and destabilizing elongation complexes. Seems to translocate with the RNA polymerase following initiation and acts by binding to the non template strand of the transcription bubble in elongation complexes. In Methanosphaera stadtmanae (strain ATCC 43021 / DSM 3091 / JCM 11832 / MCB-3), this protein is Transcription factor E.